The following is a 227-amino-acid chain: uncharacterized protein (227 aa).

7 helical membrane passes run phenylalanine 15–tyrosine 34, threonine 55–valine 77, alanine 92–leucine 114, phenylalanine 121–leucine 140, leucine 145–serine 167, proline 180–leucine 202, and phenylalanine 206–leucine 224.

It localises to the cell membrane. This is an uncharacterized protein from Archaeoglobus fulgidus (strain ATCC 49558 / DSM 4304 / JCM 9628 / NBRC 100126 / VC-16).